Reading from the N-terminus, the 227-residue chain is SPbeta prophage-derived uncharacterized membrane protein YomJ (227 aa).

2 consecutive transmembrane segments (helical) span residues 16–36 (LFFLLMDGWRGMGICLIIVGL) and 131–151 (GIVAGGLLAGGIGAAIGGLSA).

The protein localises to the cell membrane. This Bacillus subtilis (strain 168) protein is SPbeta prophage-derived uncharacterized membrane protein YomJ (yomJ).